We begin with the raw amino-acid sequence, 558 residues long: Potassium-transporting ATPase potassium-binding subunit 1 (558 aa).

12 helical membrane-spanning segments follow: residues 1-21 (MEIILFLTMMVMITYVFSGYL), 66-86 (FNGFMGFITFVLLIVQQWLFL), 127-147 (MIVMTYLMFTSSASGYAVCIA), 166-186 (IVRFIVRVLLPLSCLISILLM), 245-265 (IWSNFIEMGSMMLLPMSMLFL), 281-301 (ALILFVAMFFIFIAILTLTMW), 327-347 (FGAGLSALFTVITTAFTTGSV), 354-374 (LTPIGGLGPMVLMMLNVVFGG), 377-397 (VGLMNLLIFVLLTVFICSLMV), 416-436 (IVLVFLIHPILILVFSALAFM), 482-502 (ISTGIIMLLSRYIPIILQLMI), and 531-551 (IVFIVLLSGLTFIPVLLLGPI).

Belongs to the KdpA family. As to quaternary structure, the system is composed of three essential subunits: KdpA, KdpB and KdpC.

The protein localises to the cell membrane. Part of the high-affinity ATP-driven potassium transport (or Kdp) system, which catalyzes the hydrolysis of ATP coupled with the electrogenic transport of potassium into the cytoplasm. This subunit binds the extracellular potassium ions and delivers the ions to the membrane domain of KdpB through an intramembrane tunnel. The sequence is that of Potassium-transporting ATPase potassium-binding subunit 1 from Staphylococcus aureus (strain Mu50 / ATCC 700699).